An 86-amino-acid polypeptide reads, in one-letter code: Omega-theraphotoxin-Hhn1a 2 (86 aa).

The signal sequence occupies residues 1–21; sequence MKSIVFVALLGLALLAVVCSA. Residues 22–50 constitute a propeptide that is removed on maturation; it reads SEDAHKELLKEVVRAMVVDKTDAVQAEER. Disulfide bonds link Cys52–Cys66, Cys59–Cys71, and Cys65–Cys78.

Belongs to the neurotoxin 10 (Hwtx-1) family. 17 (Hntx-9) subfamily. Expressed by the venom gland.

The protein localises to the secreted. In terms of biological role, ion channel inhibitor. The polypeptide is Omega-theraphotoxin-Hhn1a 2 (Cyriopagopus hainanus (Chinese bird spider)).